The primary structure comprises 242 residues: Hairy and enhancer of split-related protein HELT (242 aa).

One can recognise a bHLH domain in the interval 10 to 65 (RTPVSHKVIEKRRRDRINRCLNELGKTVPMALAKQSSGKLEKAEILEMTVQYLRAL). Residue K48 is modified to N6-acetyllysine. The 36-residue stretch at 87–122 (FHYGYHECMKNLVHYLTTVERMETKDTKYARILAFL) folds into the Orange domain.

It belongs to the HEY family. In terms of assembly, self-associates. Interacts with HES5 and HEY2.

It is found in the nucleus. Functionally, transcriptional repressor which binds preferentially to the canonical E box sequence 5'-CACGCG-3'. The chain is Hairy and enhancer of split-related protein HELT (HELT) from Homo sapiens (Human).